Consider the following 190-residue polypeptide: Probable RNA-binding protein 18 (190 aa).

The region spanning 25 to 106 (HRLWIGNLDP…KKLVVRWAHA (82 aa)) is the RRM domain. The disordered stretch occupies residues 166–190 (VYSYFKPPDKKRTTPYSRTAWKSRR).

In Bos taurus (Bovine), this protein is Probable RNA-binding protein 18 (RBM18).